The sequence spans 540 residues: Glucose-6-phosphate isomerase (540 aa).

Glutamate 350 (proton donor) is an active-site residue. Catalysis depends on residues histidine 381 and lysine 503.

The protein belongs to the GPI family.

It localises to the cytoplasm. It catalyses the reaction alpha-D-glucose 6-phosphate = beta-D-fructose 6-phosphate. It participates in carbohydrate biosynthesis; gluconeogenesis. Its pathway is carbohydrate degradation; glycolysis; D-glyceraldehyde 3-phosphate and glycerone phosphate from D-glucose: step 2/4. Functionally, catalyzes the reversible isomerization of glucose-6-phosphate to fructose-6-phosphate. In Paraburkholderia phytofirmans (strain DSM 17436 / LMG 22146 / PsJN) (Burkholderia phytofirmans), this protein is Glucose-6-phosphate isomerase.